We begin with the raw amino-acid sequence, 542 residues long: MAKQLIYSDEARKAMKSGVDKLANAVKITLGPKGRYVVLDKKFGAPTITNDGVTIAKEIELEDPFENMGAQLVKEVASKTNDIAGDGTTTATVLAQSLINEGLKNITAGANANHIKKGIEKAVAAAIDEIKKIAKQVKNKGEIAQIASISASDKEIGNLIADAMEKVGKDGVITVEEGKSSETTLDVVEGMQFDRGYSSHYFVTDTERMQAILEDPYIIITDKKISSMQEILPLLEKIIQTGKSFMIIAEDIEGEALATLVLNKIRGTLKVIAVKAPGFGDRRKEMLQDIAILTGGTVITEETGLKLDKATIDLLGQAKRIVVDKENTTIVSGLGDKKEIEARIAQIRKQIEDTKSDYDKEKLQERLAKLVGGVAVVNVGAATEVEMKTKKFKVEDALNATRAGVEEGIVAGGGVALLKTQTVLEKINAADSDEKTGIEIVLKALEGPIRMIIENAGLEASVVVDKVKNSKDTAFGYDADNNEYVDMIKAGIVDPAKVTRTALENAASIASLILTTETLVTDIPEKSPKFPGGGGMPPMPEY.

ATP contacts are provided by residues 29-32 (TLGP), 86-90 (DGTTT), G413, and D494.

Belongs to the chaperonin (HSP60) family. Forms a cylinder of 14 subunits composed of two heptameric rings stacked back-to-back. Interacts with the co-chaperonin GroES.

The protein resides in the cytoplasm. The enzyme catalyses ATP + H2O + a folded polypeptide = ADP + phosphate + an unfolded polypeptide.. Together with its co-chaperonin GroES, plays an essential role in assisting protein folding. The GroEL-GroES system forms a nano-cage that allows encapsulation of the non-native substrate proteins and provides a physical environment optimized to promote and accelerate protein folding. The protein is Chaperonin GroEL of Endomicrobium trichonymphae.